We begin with the raw amino-acid sequence, 389 residues long: Probable tRNA pseudouridine synthase D 1 (389 aa).

Residue Asp63 is the Nucleophile of the active site. The 211-residue stretch at 135–345 (GAPNYYDDQR…KYTKRPIISI (211 aa)) folds into the TRUD domain.

The protein belongs to the pseudouridine synthase TruD family.

The catalysed reaction is uridine(13) in tRNA = pseudouridine(13) in tRNA. In terms of biological role, could be responsible for synthesis of pseudouridine from uracil-13 in transfer RNAs. In Methanococcus maripaludis (strain DSM 14266 / JCM 13030 / NBRC 101832 / S2 / LL), this protein is Probable tRNA pseudouridine synthase D 1 (truD1).